Here is a 439-residue protein sequence, read N- to C-terminus: Proline--tRNA ligase (439 aa).

The protein belongs to the class-II aminoacyl-tRNA synthetase family. ProS type 2 subfamily. In terms of assembly, homodimer.

Its subcellular location is the cytoplasm. It carries out the reaction tRNA(Pro) + L-proline + ATP = L-prolyl-tRNA(Pro) + AMP + diphosphate. Functionally, catalyzes the attachment of proline to tRNA(Pro) in a two-step reaction: proline is first activated by ATP to form Pro-AMP and then transferred to the acceptor end of tRNA(Pro). The chain is Proline--tRNA ligase from Nitrobacter winogradskyi (strain ATCC 25391 / DSM 10237 / CIP 104748 / NCIMB 11846 / Nb-255).